The sequence spans 391 residues: Succinate--CoA ligase [ADP-forming] subunit beta (391 aa).

In terms of domain architecture, ATP-grasp spans 9–246 (KHLFADYDIP…ITQEDEAEVQ (238 aa)). Residues lysine 46, 53–55 (GRG), glutamate 99, leucine 102, and glutamate 107 contribute to the ATP site. Asparagine 199 and aspartate 213 together coordinate Mg(2+). Substrate contacts are provided by residues asparagine 266 and 323–325 (GIV).

It belongs to the succinate/malate CoA ligase beta subunit family. As to quaternary structure, heterotetramer of two alpha and two beta subunits. It depends on Mg(2+) as a cofactor.

It catalyses the reaction succinate + ATP + CoA = succinyl-CoA + ADP + phosphate. The enzyme catalyses GTP + succinate + CoA = succinyl-CoA + GDP + phosphate. It participates in carbohydrate metabolism; tricarboxylic acid cycle; succinate from succinyl-CoA (ligase route): step 1/1. Succinyl-CoA synthetase functions in the citric acid cycle (TCA), coupling the hydrolysis of succinyl-CoA to the synthesis of either ATP or GTP and thus represents the only step of substrate-level phosphorylation in the TCA. The beta subunit provides nucleotide specificity of the enzyme and binds the substrate succinate, while the binding sites for coenzyme A and phosphate are found in the alpha subunit. The protein is Succinate--CoA ligase [ADP-forming] subunit beta of Alkalilimnicola ehrlichii (strain ATCC BAA-1101 / DSM 17681 / MLHE-1).